Here is a 235-residue protein sequence, read N- to C-terminus: 1-(5-phosphoribosyl)-5-[(5-phosphoribosylamino)methylideneamino] imidazole-4-carboxamide isomerase (235 aa).

D8 (proton acceptor) is an active-site residue. The active-site Proton donor is D127.

The protein belongs to the HisA/HisF family.

It localises to the cytoplasm. It catalyses the reaction 1-(5-phospho-beta-D-ribosyl)-5-[(5-phospho-beta-D-ribosylamino)methylideneamino]imidazole-4-carboxamide = 5-[(5-phospho-1-deoxy-D-ribulos-1-ylimino)methylamino]-1-(5-phospho-beta-D-ribosyl)imidazole-4-carboxamide. It functions in the pathway amino-acid biosynthesis; L-histidine biosynthesis; L-histidine from 5-phospho-alpha-D-ribose 1-diphosphate: step 4/9. The sequence is that of 1-(5-phosphoribosyl)-5-[(5-phosphoribosylamino)methylideneamino] imidazole-4-carboxamide isomerase from Nautilia profundicola (strain ATCC BAA-1463 / DSM 18972 / AmH).